The following is a 110-amino-acid chain: Nucleoid-associated protein PERMA_0533 (110 aa).

This sequence belongs to the YbaB/EbfC family. In terms of assembly, homodimer.

The protein resides in the cytoplasm. It is found in the nucleoid. In terms of biological role, binds to DNA and alters its conformation. May be involved in regulation of gene expression, nucleoid organization and DNA protection. The polypeptide is Nucleoid-associated protein PERMA_0533 (Persephonella marina (strain DSM 14350 / EX-H1)).